A 313-amino-acid polypeptide reads, in one-letter code: Adhesin MafA 2 (313 aa).

Residues 1–14 form the signal peptide; sequence MKTLLLLIPLVLTA. C15 is lipidated: N-palmitoyl cysteine. Residue C15 is the site of S-diacylglycerol cysteine attachment. Positions 282-297 are enriched in polar residues; sequence GDTTAQNRPDFKQNNG. The interval 282–313 is disordered; sequence GDTTAQNRPDFKQNNGKKPDVGNEVIRRRKGG.

The protein belongs to the MafA family.

The protein localises to the cell outer membrane. In Neisseria meningitidis serogroup A / serotype 4A (strain DSM 15465 / Z2491), this protein is Adhesin MafA 2 (mafA2).